A 187-amino-acid chain; its full sequence is MTHILTLDNAVATLTQGGVIAYPTEAVWGLGCDPRQEAAVLRLLEIKRRPVDKGVIVVTSRVDVLRDWVDIDALAPARRQDVLASWPGPHTWILPVTARAPRWVTGEHDGLAVRISAHPVVAALCAAWGAPLVSTSANLAGEPPARSRAALEPALLATIDGVVDGEVGALAQPTRIRDARSGQILRD.

Residues 4 to 187 (ILTLDNAVAT…DARSGQILRD (184 aa)) enclose the YrdC-like domain.

Belongs to the SUA5 family. TsaC subfamily.

It is found in the cytoplasm. The enzyme catalyses L-threonine + hydrogencarbonate + ATP = L-threonylcarbamoyladenylate + diphosphate + H2O. Functionally, required for the formation of a threonylcarbamoyl group on adenosine at position 37 (t(6)A37) in tRNAs that read codons beginning with adenine. Catalyzes the conversion of L-threonine, HCO(3)(-)/CO(2) and ATP to give threonylcarbamoyl-AMP (TC-AMP) as the acyladenylate intermediate, with the release of diphosphate. This Xanthomonas oryzae pv. oryzae (strain MAFF 311018) protein is Threonylcarbamoyl-AMP synthase.